We begin with the raw amino-acid sequence, 530 residues long: Na(+)/H(+) antiporter NhaB (530 aa).

12 consecutive transmembrane segments (helical) span residues 13-33 (FLGKAPDWYKIAILSFLVINP), 34-54 (LVFFFVDPFTAGWLLVVEFIF), 90-110 (LVANIEVLLLLVFMVAGIYFM), 121-141 (ILIGIKSKTALSVAFCFTAAF), 145-165 (FLDALTVIAVVISVAVGFYAI), 205-225 (LLMHAGVGTALGGVMTMVGEP), 241-261 (FIIRMLPITAPVFICGILTCI), 306-326 (GLIAVWLIVGLALHLAAVGLI), 351-371 (EEALPFTALLAVFFAVVAVII), 393-413 (LALFYVANGLLSMVSDNVFVG), 455-475 (GQAAFLFLLTSALAPLIQLSY), and 481-501 (MALPYTIVLALVGMFGIIFFL).

This sequence belongs to the NhaB Na(+)/H(+) (TC 2.A.34) antiporter family.

The protein localises to the cell inner membrane. The catalysed reaction is 2 Na(+)(in) + 3 H(+)(out) = 2 Na(+)(out) + 3 H(+)(in). Its function is as follows. Na(+)/H(+) antiporter that extrudes sodium in exchange for external protons. The protein is Na(+)/H(+) antiporter NhaB of Aliivibrio fischeri (strain ATCC 700601 / ES114) (Vibrio fischeri).